A 648-amino-acid chain; its full sequence is 1-deoxy-D-xylulose-5-phosphate synthase (648 aa).

Residues His73 and 114 to 116 contribute to the thiamine diphosphate site; that span reads SHA. Asp145 provides a ligand contact to Mg(2+). Thiamine diphosphate is bound by residues 146–147, Asn175, Tyr286, and Glu367; that span reads GA. Residue Asn175 coordinates Mg(2+).

The protein belongs to the transketolase family. DXPS subfamily. In terms of assembly, homodimer. It depends on Mg(2+) as a cofactor. The cofactor is thiamine diphosphate.

The enzyme catalyses D-glyceraldehyde 3-phosphate + pyruvate + H(+) = 1-deoxy-D-xylulose 5-phosphate + CO2. It participates in metabolic intermediate biosynthesis; 1-deoxy-D-xylulose 5-phosphate biosynthesis; 1-deoxy-D-xylulose 5-phosphate from D-glyceraldehyde 3-phosphate and pyruvate: step 1/1. In terms of biological role, catalyzes the acyloin condensation reaction between C atoms 2 and 3 of pyruvate and glyceraldehyde 3-phosphate to yield 1-deoxy-D-xylulose-5-phosphate (DXP). The chain is 1-deoxy-D-xylulose-5-phosphate synthase from Rhodococcus erythropolis (strain PR4 / NBRC 100887).